Reading from the N-terminus, the 314-residue chain is Methionyl-tRNA formyltransferase (314 aa).

Position 111–114 (Ser-111–Pro-114) interacts with (6S)-5,6,7,8-tetrahydrofolate.

This sequence belongs to the Fmt family.

It catalyses the reaction L-methionyl-tRNA(fMet) + (6R)-10-formyltetrahydrofolate = N-formyl-L-methionyl-tRNA(fMet) + (6S)-5,6,7,8-tetrahydrofolate + H(+). Its function is as follows. Attaches a formyl group to the free amino group of methionyl-tRNA(fMet). The formyl group appears to play a dual role in the initiator identity of N-formylmethionyl-tRNA by promoting its recognition by IF2 and preventing the misappropriation of this tRNA by the elongation apparatus. This is Methionyl-tRNA formyltransferase from Chlorobium chlorochromatii (strain CaD3).